The chain runs to 358 residues: Peptide chain release factor 1 (358 aa).

Gln-234 carries the post-translational modification N5-methylglutamine. Residues 283–306 (ERLHSERAGQRKSMVGSGDRSERI) are disordered.

This sequence belongs to the prokaryotic/mitochondrial release factor family. In terms of processing, methylated by PrmC. Methylation increases the termination efficiency of RF1.

Its subcellular location is the cytoplasm. Peptide chain release factor 1 directs the termination of translation in response to the peptide chain termination codons UAG and UAA. The chain is Peptide chain release factor 1 from Zymomonas mobilis subsp. mobilis (strain ATCC 31821 / ZM4 / CP4).